The sequence spans 621 residues: Hemolysin ahh1 (621 aa).

The first 30 residues, M1–A30, serve as a signal peptide directing secretion. In terms of domain architecture, Ricin B-type lectin spans R491 to S610.

Belongs to the HlyA hemolysin family.

Its function is as follows. Bacterial hemolysins are exotoxins that attack blood cell membranes and cause cell rupture by mechanisms not clearly defined. The polypeptide is Hemolysin ahh1 (ahh1) (Aeromonas hydrophila subsp. hydrophila (strain ATCC 7966 / DSM 30187 / BCRC 13018 / CCUG 14551 / JCM 1027 / KCTC 2358 / NCIMB 9240 / NCTC 8049)).